The chain runs to 789 residues: Phenylalanine--tRNA ligase beta subunit (789 aa).

A tRNA-binding domain is found at 39–149 (ADGLEAFRIA…HEAPVGQSYV (111 aa)). The B5 domain maps to 399–471 (SAVPVISYDP…RIEGLDNVPS (73 aa)). Mg(2+) is bound by residues aspartate 449, aspartate 455, and aspartate 459. Residues 696 to 788 (SMLQPVFRDF…AAAKKGARLR (93 aa)) enclose the FDX-ACB domain.

The protein belongs to the phenylalanyl-tRNA synthetase beta subunit family. Type 1 subfamily. In terms of assembly, tetramer of two alpha and two beta subunits. Requires Mg(2+) as cofactor.

It localises to the cytoplasm. The enzyme catalyses tRNA(Phe) + L-phenylalanine + ATP = L-phenylalanyl-tRNA(Phe) + AMP + diphosphate + H(+). This Zymomonas mobilis subsp. mobilis (strain ATCC 31821 / ZM4 / CP4) protein is Phenylalanine--tRNA ligase beta subunit.